Here is a 105-residue protein sequence, read N- to C-terminus: Pyrimidine/purine nucleoside phosphorylase (105 aa).

It belongs to the nucleoside phosphorylase PpnP family.

It carries out the reaction a purine D-ribonucleoside + phosphate = a purine nucleobase + alpha-D-ribose 1-phosphate. The catalysed reaction is adenosine + phosphate = alpha-D-ribose 1-phosphate + adenine. It catalyses the reaction cytidine + phosphate = cytosine + alpha-D-ribose 1-phosphate. The enzyme catalyses guanosine + phosphate = alpha-D-ribose 1-phosphate + guanine. It carries out the reaction inosine + phosphate = alpha-D-ribose 1-phosphate + hypoxanthine. The catalysed reaction is thymidine + phosphate = 2-deoxy-alpha-D-ribose 1-phosphate + thymine. It catalyses the reaction uridine + phosphate = alpha-D-ribose 1-phosphate + uracil. The enzyme catalyses xanthosine + phosphate = alpha-D-ribose 1-phosphate + xanthine. In terms of biological role, catalyzes the phosphorolysis of diverse nucleosides, yielding D-ribose 1-phosphate and the respective free bases. Can use uridine, adenosine, guanosine, cytidine, thymidine, inosine and xanthosine as substrates. Also catalyzes the reverse reactions. This chain is Pyrimidine/purine nucleoside phosphorylase, found in Anaeromyxobacter sp. (strain Fw109-5).